A 287-amino-acid chain; its full sequence is Heavy metal-associated isoprenylated plant protein 4 (287 aa).

HMA domains are found at residues 14 to 80 (IITA…VELI) and 112 to 176 (IRTT…KHAE). 4 residues coordinate a metal cation: cysteine 25, cysteine 28, cysteine 123, and cysteine 126. Residues 179–235 (SSKTEEEKKKEEEDKKKKEEEDKKKKEDEKKKEEEKKKEEENKKKEGEKKKEEVKVE) adopt a coiled-coil conformation. The segment at 181 to 232 (KTEEEKKKEEEDKKKKEEEDKKKKEDEKKKEEEKKKEEENKKKEGEKKKEEV) is disordered. Cysteine 284 carries the cysteine methyl ester modification. Residue cysteine 284 is the site of S-farnesyl cysteine attachment. A propeptide spans 285 to 287 (RIV) (removed in mature form).

This sequence belongs to the HIPP family.

Heavy-metal-binding protein. In Arabidopsis thaliana (Mouse-ear cress), this protein is Heavy metal-associated isoprenylated plant protein 4.